Reading from the N-terminus, the 123-residue chain is Ribosome-binding factor A (123 aa).

Belongs to the RbfA family. Monomer. Binds 30S ribosomal subunits, but not 50S ribosomal subunits or 70S ribosomes.

The protein localises to the cytoplasm. In terms of biological role, one of several proteins that assist in the late maturation steps of the functional core of the 30S ribosomal subunit. Associates with free 30S ribosomal subunits (but not with 30S subunits that are part of 70S ribosomes or polysomes). Required for efficient processing of 16S rRNA. May interact with the 5'-terminal helix region of 16S rRNA. The chain is Ribosome-binding factor A from Legionella pneumophila (strain Paris).